A 356-amino-acid chain; its full sequence is Protein RecA (356 aa).

Position 67–74 (67–74) interacts with ATP; sequence GPESSGKT.

It belongs to the RecA family.

It localises to the cytoplasm. Can catalyze the hydrolysis of ATP in the presence of single-stranded DNA, the ATP-dependent uptake of single-stranded DNA by duplex DNA, and the ATP-dependent hybridization of homologous single-stranded DNAs. It interacts with LexA causing its activation and leading to its autocatalytic cleavage. The chain is Protein RecA from Yersinia pestis bv. Antiqua (strain Angola).